The chain runs to 749 residues: Ribosome-releasing factor 2, mitochondrial (749 aa).

The N-terminal 22 residues, 1–22, are a transit peptide targeting the mitochondrion; it reads MLLLLCNRSVVPRGIRRILRTA. The 279-residue stretch at 44–322 folds into the tr-type G domain; sequence KNIRNIGILA…AVLKYLPAPN (279 aa). GTP-binding positions include 53–60, 117–121, and 171–174; these read AHIDGGKT, DTPGH, and NKMD.

This sequence belongs to the TRAFAC class translation factor GTPase superfamily. Classic translation factor GTPase family. EF-G/EF-2 subfamily.

The protein localises to the mitochondrion. Its function is as follows. Mitochondrial GTPase that mediates the disassembly of ribosomes from messenger RNA at the termination of mitochondrial protein biosynthesis. Not involved in the GTP-dependent ribosomal translocation step during translation elongation. In Culex quinquefasciatus (Southern house mosquito), this protein is Ribosome-releasing factor 2, mitochondrial.